The primary structure comprises 272 residues: NAD kinase (272 aa).

The active-site Proton acceptor is aspartate 50. Residues 50-51 (DG), 126-127 (NE), arginine 152, aspartate 154, 165-170 (TAYNKS), and alanine 189 each bind NAD(+).

It belongs to the NAD kinase family. A divalent metal cation serves as cofactor.

It localises to the cytoplasm. It carries out the reaction NAD(+) + ATP = ADP + NADP(+) + H(+). Its function is as follows. Involved in the regulation of the intracellular balance of NAD and NADP, and is a key enzyme in the biosynthesis of NADP. Catalyzes specifically the phosphorylation on 2'-hydroxyl of the adenosine moiety of NAD to yield NADP. This is NAD kinase from Streptococcus pneumoniae (strain 70585).